A 426-amino-acid polypeptide reads, in one-letter code: Protein PHOSPHATE STARVATION RESPONSE 2 (426 aa).

Disordered regions lie at residues 27 to 81, 96 to 123, and 198 to 247; these read ATLD…PLRS, YTNA…QYGG, and TQPQ…NSKT. A compositionally biased stretch (polar residues) spans 69-81; the sequence is FQSSTGSVGPLRS. Composition is skewed to low complexity over residues 102–119 and 205–225; these read YNSQ…NYGS and AAQS…SSQS. A compositionally biased stretch (polar residues) spans 237 to 246; sequence SGASNTSNSK. The HTH myb-type domain maps to 243 to 303; the sequence is SNSKTRMRWT…HLQKYRTARY (61 aa). Residues 274–299 constitute a DNA-binding region (H-T-H motif); the sequence is PKGVLKLMKADNLTIYHVKSHLQKYR. Disordered regions lie at residues 302–326 and 382–426; these read RYRP…PSID and DKAV…SGDR. A compositionally biased stretch (basic and acidic residues) spans 303–322; the sequence is YRPELSEGSSEKKAASKEDI. Polar residues-rich tracts occupy residues 387–401 and 411–426; these read ASTS…SDLP and ENSQ…SGDR.

As to quaternary structure, interacts (via C-terminus) with SPX4 (via N-terminus) in the presence of inositol polyphosphate. Interacts (via C-terminus) with SPX1 and SPX2 (via SPX domain). Interacts with RLI1 in the nucleus.

Its subcellular location is the nucleus. It is found in the cytoplasm. Its function is as follows. Transcription factor involved in phosphate starvation signaling. Binds to P1BS, an imperfect palindromic sequence 5'-GNATATNC-3', to promote the expression of inorganic phosphate (Pi) starvation-responsive genes. Functionally redundant with PHR1 and PHR3 in regulating Pi starvation response and Pi homeostasis. Involved in both systematic and local Pi-signaling pathways. Regulates several Pi transporters. PHR2 binding to DNA is repressed redundantly by SPX1, SPX2 and SPX4 in a PI-dependent manner. The DNA-binding activity is also repressed by SPX4. Involved in root growth under Pi deprivation. Involved in the modulation of Pi response and homeostasis together with RLI1; promotes RLI1 expression in response to nitrate availability, thus triggering the nitrate-induced phosphate response (NIPR). The chain is Protein PHOSPHATE STARVATION RESPONSE 2 from Oryza sativa subsp. indica (Rice).